Consider the following 403-residue polypeptide: Protein-export membrane protein SecD (403 aa).

6 helical membrane passes run 13 to 33 (LLVI…KGVN), 245 to 265 (FLKM…VIIA), 285 to 305 (VVFL…PALA), 306 to 326 (GIIL…DEIV), 347 to 367 (VVLA…VAGM), and 368 to 388 (GLLK…VVIT).

Belongs to the SecD/SecF family. SecD subfamily. As to quaternary structure, part of the protein translocation apparatus. Forms a complex with SecF.

The protein localises to the cell membrane. Involved in protein export. The protein is Protein-export membrane protein SecD of Methanopyrus kandleri (strain AV19 / DSM 6324 / JCM 9639 / NBRC 100938).